We begin with the raw amino-acid sequence, 480 residues long: Putative auxin transporter-like protein 4 (480 aa).

Topologically, residues 1-66 (MASEKVETIV…DAWFSCASNQ (66 aa)) are cytoplasmic. The chain crosses the membrane as a helical span at residues 67–84 (VAQVLLTLPYSFSQLGMA). At 85-86 (SG) the chain is on the extracellular side. Residues 87-107 (VAFQVFYGLMGSWTAYLISVL) traverse the membrane as a helical segment. Residues 108 to 143 (YVEYRTRRERDKVDFRNHVIQWFEVLDGLLGRHWRN) lie on the Cytoplasmic side of the membrane. A helical transmembrane segment spans residues 144-164 (AGLLFNCTFLLFGSVIQLIAC). Residues 165–179 (ASNIYYINDRLDKRT) lie on the Extracellular side of the membrane. Residues 180–200 (WTYIFGACCATTVFVPSFHNY) form a helical membrane-spanning segment. The Cytoplasmic portion of the chain corresponds to 201–203 (RVW). A helical membrane pass occupies residues 204–224 (SFLGLLMTSYTAWYLTVAAVV). The Extracellular segment spans residues 225 to 241 (HGKVDGAAPRAGPSKTM). Residues 242–262 (VLYFTGATNILYTFGGHAVTV) traverse the membrane as a helical segment. Residues 263-275 (EIMHAMWRPRRFK) are Cytoplasmic-facing. The chain crosses the membrane as a helical span at residues 276–296 (MIYLAATAYVLTLTLPSAAAM). At 297-323 (YWAFGDALLDHSNAFALLPRTPWRDAA) the chain is on the extracellular side. Residues 324-344 (VVLMLIHQFITFGFACTPLYF) form a helical membrane-spanning segment. Residues 345–365 (VWEKAIGVHGGAGVLRRAAAR) are Cytoplasmic-facing. Residues 366-386 (LPVVLPIWFLAVIFPFFGPIN) traverse the membrane as a helical segment. Ser-387 is a topological domain (extracellular). A helical membrane pass occupies residues 388–408 (TVGSFLVSFTVYIIPAMAHMA). At 409–433 (TFAPAAARENAVEPPPRALGGWPGT) the chain is on the cytoplasmic side. Residues 434–454 (FAANCFVVAWVLVVGFGFGGW) form a helical membrane-spanning segment. Over 455–480 (ASTVNFVRQVDTFGLFTKCYQCPPRH) the chain is Extracellular.

This sequence belongs to the amino acid/polyamine transporter 2 family. Amino acid/auxin permease (AAAP) (TC 2.A.18.1) subfamily.

The protein resides in the cell membrane. In terms of biological role, carrier protein involved in proton-driven auxin influx. May mediate the formation of auxin gradient from developing leaves (site of auxin biosynthesis) to tips. The polypeptide is Putative auxin transporter-like protein 4 (Oryza sativa subsp. japonica (Rice)).